A 200-amino-acid chain; its full sequence is ATP-dependent Clp protease proteolytic subunit 2 (200 aa).

The active-site Nucleophile is Ser100.

This sequence belongs to the peptidase S14 family. As to quaternary structure, fourteen ClpP subunits assemble into 2 heptameric rings which stack back to back to give a disk-like structure with a central cavity, resembling the structure of eukaryotic proteasomes.

Its subcellular location is the cytoplasm. It carries out the reaction Hydrolysis of proteins to small peptides in the presence of ATP and magnesium. alpha-casein is the usual test substrate. In the absence of ATP, only oligopeptides shorter than five residues are hydrolyzed (such as succinyl-Leu-Tyr-|-NHMec, and Leu-Tyr-Leu-|-Tyr-Trp, in which cleavage of the -Tyr-|-Leu- and -Tyr-|-Trp bonds also occurs).. Cleaves peptides in various proteins in a process that requires ATP hydrolysis. Has a chymotrypsin-like activity. Plays a major role in the degradation of misfolded proteins. The chain is ATP-dependent Clp protease proteolytic subunit 2 from Streptomyces avermitilis (strain ATCC 31267 / DSM 46492 / JCM 5070 / NBRC 14893 / NCIMB 12804 / NRRL 8165 / MA-4680).